Consider the following 585-residue polypeptide: 4-hydroxy-3-methylbut-2-en-1-yl diphosphate synthase (flavodoxin) (585 aa).

Residues cysteine 492, cysteine 495, cysteine 526, and glutamate 533 each coordinate [4Fe-4S] cluster.

Belongs to the IspG family. [4Fe-4S] cluster serves as cofactor.

It carries out the reaction (2E)-4-hydroxy-3-methylbut-2-enyl diphosphate + oxidized [flavodoxin] + H2O + 2 H(+) = 2-C-methyl-D-erythritol 2,4-cyclic diphosphate + reduced [flavodoxin]. It functions in the pathway isoprenoid biosynthesis; isopentenyl diphosphate biosynthesis via DXP pathway; isopentenyl diphosphate from 1-deoxy-D-xylulose 5-phosphate: step 5/6. Functionally, converts 2C-methyl-D-erythritol 2,4-cyclodiphosphate (ME-2,4cPP) into 1-hydroxy-2-methyl-2-(E)-butenyl 4-diphosphate. This chain is 4-hydroxy-3-methylbut-2-en-1-yl diphosphate synthase (flavodoxin), found in Akkermansia muciniphila (strain ATCC BAA-835 / DSM 22959 / JCM 33894 / BCRC 81048 / CCUG 64013 / CIP 107961 / Muc).